A 327-amino-acid chain; its full sequence is G protein pathway suppressor 2 (327 aa).

The stretch at 14-109 forms a coiled coil; sequence MARALHRHIM…RRRKEQSDLT (96 aa). A disordered region spans residues 26–65; the sequence is RERKRQEEEEVDKMMEQKMKEEQERRKKKEMEERMSLEET. Glycyl lysine isopeptide (Lys-Gly) (interchain with G-Cter in SUMO1) cross-links involve residues lysine 45 and lysine 71. Residues 61–94 form an interaction with SUMO region; that stretch reads SLEETKEQILKLQEKLSALQEEKHQLFLQLKKVL. Disordered regions lie at residues 178-208, 253-285, and 300-327; these read GQFQ…SPSQ, QKQM…APGL, and KSGF…FYHK. Residues 253-271 are compositionally biased toward polar residues; the sequence is QKQMEHANQQTSFSDSSSL. Arginine 312 is modified (asymmetric dimethylarginine). A compositionally biased stretch (polar residues) spans 317–327; sequence QHSQNPRFYHK. Arginine 323 is subject to Asymmetric dimethylarginine; alternate. The residue at position 323 (arginine 323) is an Omega-N-methylarginine; alternate.

In terms of assembly, component of the N-Cor repressor complex, at least composed of NCOR1, NCOR2, HDAC3, TBL1X, TBL1R, CORO2A and GPS2. Interacts (when sumoylated at Lys-71) with TBL1X; leading to protect GPS2 from degradation by the proteasome. Interacts with UBE2N; leading to inhibit UBE2N/Ubc13 activity. Interacts with TRAF1. Interacts with TRAF2. Interacts with TRAF6. Interacts with PPARG (when in the liganded conformation). Interacts with (sumoylated) NR1H2; interaction with sumoylated NR1H2 and NR5A2 onto hepatic acute phase protein promoters prevents N-Cor corepressor complex dissociation. Interacts with (sumoylated) NR5A2; interaction with sumoylated NR1H2 and NR5A2 onto hepatic acute phase protein promoters prevents N-Cor corepressor complex dissociation. Interacts with NR1H3. Interacts with RFX4. Interacts with ANKRD26. Post-translationally, sumoylation regulates its subcellular location. Sumoylation at Lys-45 and Lys-71 regulates the shuttling between the cytoplasm and the nucleus. Sumoylation at Lys-71 is required for interaction with TBL1X. Sumoylated at Lys-45 and Lys-71 in mitochondrion. Desumoylation by SENP1 leads to relocation from the mitochondria to the nucleus. Ubiquitinated at the C-terminus by SIAH2; leading to its degradation by the proteasome. Interaction with TBL1X and methylation at Arg-323 protect GPS2 against ubiquitination and degradation. In terms of processing, methylated at Arg-312 and Arg-323 by PRMT6. Methylation at Arg-323 protects from degradation by the proteasome.

Its subcellular location is the nucleus. The protein localises to the mitochondrion. It is found in the cytoplasm. It localises to the cytosol. Key regulator of inflammation, lipid metabolism and mitochondrion homeostasis that acts by inhibiting the activity of the ubiquitin-conjugating enzyme UBE2N/Ubc13, thereby inhibiting 'Lys-63'-linked ubiquitination. In the nucleus, can both acts as a corepressor and coactivator of transcription, depending on the context. Acts as a transcription coactivator in adipocytes by promoting the recruitment of PPARG to promoters: acts by inhibiting the activity of the ubiquitin-conjugating enzyme UBE2N/Ubc13, leading to stabilization of KDM4A and subsequent histone H3 'Lys-9' (H3K9) demethylation. Promotes cholesterol efflux by acting as a transcription coactivator. Acts as a regulator of B-cell development by inhibiting UBE2N/Ubc13, thereby restricting the activation of Toll-like receptors (TLRs) and B-cell antigen receptors (BCRs) signaling pathways. Acts as a key mediator of mitochondrial stress response: in response to mitochondrial depolarization, relocates from the mitochondria to the nucleus following desumoylation and specifically promotes expression of nuclear-encoded mitochondrial genes. Promotes transcription of nuclear-encoded mitochondrial genes by inhibiting UBE2N/Ubc13. Can also act as a corepressor as part of the N-Cor repressor complex by repressing active PPARG. Plays an anti-inflammatory role in macrophages and is required for insulin sensitivity by acting as a corepressor. Plays an anti-inflammatory role during the hepatic acute phase response by interacting with sumoylated NR1H2 and NR5A2 proteins, thereby preventing N-Cor corepressor complex dissociation. In the cytosol, also plays a non-transcriptional role by regulating insulin signaling and pro-inflammatory pathways. In the cytoplasm, acts as a negative regulator of inflammation by inhibiting the pro-inflammatory TNF-alpha pathway; acts by repressing UBE2N/Ubc13 activity. In the cytoplasm of adipocytes, restricts the activation of insulin signaling via inhibition of UBE2N/Ubc13-mediated ubiquitination of AKT. Able to suppress G-protein- and mitogen-activated protein kinase-mediated signal transduction. This chain is G protein pathway suppressor 2, found in Mus musculus (Mouse).